Here is an 854-residue protein sequence, read N- to C-terminus: Leucine--tRNA ligase (854 aa).

Residues 1-32 (MARRDMAAETMDPRASTEPSPNEPREPARYDH) form a disordered region. Basic and acidic residues predominate over residues 23–32 (EPREPARYDH). The 'HIGH' region signature appears at 69–80 (PYPSGSGLHVGH). The short motif at 633–637 (KMSKS) is the 'KMSKS' region element. An ATP-binding site is contributed by K636.

Belongs to the class-I aminoacyl-tRNA synthetase family.

It localises to the cytoplasm. It carries out the reaction tRNA(Leu) + L-leucine + ATP = L-leucyl-tRNA(Leu) + AMP + diphosphate. In Sorangium cellulosum (strain So ce56) (Polyangium cellulosum (strain So ce56)), this protein is Leucine--tRNA ligase.